Here is a 177-residue protein sequence, read N- to C-terminus: MSRVANSPVTLPSGVDLTLNGQTVVVKGGKGSLEFNIHTSVQVSKEENVITFAARDGAKQSRALAGTTRALVNNMVVGVSQGFEKRLFLQGVGYRAALKGNVLNLSLGFSHPVDYELPEGVTAECASQTEIVIRGIDKQAVGQVAAEVRGFRPPEPYKGKGVRYSDEVIRRKEAKKK.

The protein belongs to the universal ribosomal protein uL6 family. In terms of assembly, part of the 50S ribosomal subunit.

Functionally, this protein binds to the 23S rRNA, and is important in its secondary structure. It is located near the subunit interface in the base of the L7/L12 stalk, and near the tRNA binding site of the peptidyltransferase center. This chain is Large ribosomal subunit protein uL6, found in Marinomonas sp. (strain MWYL1).